Here is a 350-residue protein sequence, read N- to C-terminus: Chorismate synthase (350 aa).

NADP(+) contacts are provided by Arg39 and Arg45. The interval 85–104 is disordered; that stretch reads KDKKVPPVTRPRPGHADLPG. Residues 119-121, 213-214, Gly258, 273-277, and Arg299 each bind FMN; these read RAS, QG, and KPIPT.

It belongs to the chorismate synthase family. Homotetramer. It depends on FMNH2 as a cofactor.

The enzyme catalyses 5-O-(1-carboxyvinyl)-3-phosphoshikimate = chorismate + phosphate. It functions in the pathway metabolic intermediate biosynthesis; chorismate biosynthesis; chorismate from D-erythrose 4-phosphate and phosphoenolpyruvate: step 7/7. Functionally, catalyzes the anti-1,4-elimination of the C-3 phosphate and the C-6 proR hydrogen from 5-enolpyruvylshikimate-3-phosphate (EPSP) to yield chorismate, which is the branch point compound that serves as the starting substrate for the three terminal pathways of aromatic amino acid biosynthesis. This reaction introduces a second double bond into the aromatic ring system. This is Chorismate synthase from Caldanaerobacter subterraneus subsp. tengcongensis (strain DSM 15242 / JCM 11007 / NBRC 100824 / MB4) (Thermoanaerobacter tengcongensis).